Consider the following 502-residue polypeptide: Probable cytosol aminopeptidase (502 aa).

Residues Lys265 and Asp270 each contribute to the Mn(2+) site. The active site involves Lys277. Asp288, Asp347, and Glu349 together coordinate Mn(2+). Arg351 is an active-site residue.

This sequence belongs to the peptidase M17 family. It depends on Mn(2+) as a cofactor.

The protein localises to the cytoplasm. The enzyme catalyses Release of an N-terminal amino acid, Xaa-|-Yaa-, in which Xaa is preferably Leu, but may be other amino acids including Pro although not Arg or Lys, and Yaa may be Pro. Amino acid amides and methyl esters are also readily hydrolyzed, but rates on arylamides are exceedingly low.. It carries out the reaction Release of an N-terminal amino acid, preferentially leucine, but not glutamic or aspartic acids.. Its function is as follows. Presumably involved in the processing and regular turnover of intracellular proteins. Catalyzes the removal of unsubstituted N-terminal amino acids from various peptides. This is Probable cytosol aminopeptidase from Rickettsia bellii (strain RML369-C).